The primary structure comprises 198 residues: ATP-dependent Clp protease proteolytic subunit 1 (198 aa).

The active-site Nucleophile is the S98. H123 is a catalytic residue.

Belongs to the peptidase S14 family. In terms of assembly, fourteen ClpP subunits assemble into 2 heptameric rings which stack back to back to give a disk-like structure with a central cavity, resembling the structure of eukaryotic proteasomes.

It is found in the cytoplasm. The catalysed reaction is Hydrolysis of proteins to small peptides in the presence of ATP and magnesium. alpha-casein is the usual test substrate. In the absence of ATP, only oligopeptides shorter than five residues are hydrolyzed (such as succinyl-Leu-Tyr-|-NHMec, and Leu-Tyr-Leu-|-Tyr-Trp, in which cleavage of the -Tyr-|-Leu- and -Tyr-|-Trp bonds also occurs).. In terms of biological role, cleaves peptides in various proteins in a process that requires ATP hydrolysis. Has a chymotrypsin-like activity. Plays a major role in the degradation of misfolded proteins. The sequence is that of ATP-dependent Clp protease proteolytic subunit 1 from Leptospira interrogans serogroup Icterohaemorrhagiae serovar copenhageni (strain Fiocruz L1-130).